Consider the following 778-residue polypeptide: Protection of telomeres protein 1 (778 aa).

This sequence belongs to the telombin family. As to quaternary structure, homodimer or homooligomer. Component of the telomerase ribonucleoprotein complex. Binds single-stranded telomeric DNA as a monomer. Found in a complex with TERF1, TINF2 and TNKS1. Interacts with TNKS1.

The protein resides in the nucleus. The protein localises to the chromosome. It is found in the telomere. Its function is as follows. Component of the telomerase ribonucleoprotein (RNP) complex that is essential for the replication of chromosome termini. Is a component of the double-stranded telomeric DNA-binding TRF1 complex that is involved in the regulation of telomere length by cis-inhibition of telomerase. Also acts as a single-stranded telomeric DNA-binding protein and thus may act as a downstream effector of the TRF1 complex and may transduce information about telomere maintenance and/or length to the telomere terminus. Binds to at least two telomeric single-stranded 5'-TTAGGG-3' repeats (G-strand). Its activity is TERT dependent but it does not increase TERT activity. The protein is Protection of telomeres protein 1 (POT1) of Gallus gallus (Chicken).